Consider the following 291-residue polypeptide: BTB/POZ domain-containing protein 19 (291 aa).

In terms of domain architecture, BTB spans 29-98 (SDVCFVVGQE…LYTNSVKLYR (70 aa)). In terms of domain architecture, BACK spans 134–234 (CEALQVAVTF…LALLAPAELS (101 aa)).

The sequence is that of BTB/POZ domain-containing protein 19 (BTBD19) from Homo sapiens (Human).